We begin with the raw amino-acid sequence, 184 residues long: 20.9 kDa protein (184 aa).

This chain is 20.9 kDa protein, found in Zymomonas mobilis subsp. mobilis (strain ATCC 10988 / DSM 424 / LMG 404 / NCIMB 8938 / NRRL B-806 / ZM1).